The primary structure comprises 182 residues: Glutathione-regulated potassium-efflux system ancillary protein KefG (182 aa).

This sequence belongs to the NAD(P)H dehydrogenase (quinone) family. KefG subfamily. As to quaternary structure, interacts with KefB.

The protein resides in the cell inner membrane. The catalysed reaction is a quinone + NADH + H(+) = a quinol + NAD(+). It carries out the reaction a quinone + NADPH + H(+) = a quinol + NADP(+). Regulatory subunit of a potassium efflux system that confers protection against electrophiles. Required for full activity of KefB. The polypeptide is Glutathione-regulated potassium-efflux system ancillary protein KefG (Yersinia pestis bv. Antiqua (strain Nepal516)).